Reading from the N-terminus, the 131-residue chain is uncharacterized protein (131 aa).

Positions 4–44 (QKPEQDVNKKIEELEKKVQELQEQLEKTKQAVKTVASILDN) form a coiled coil.

This is an uncharacterized protein from Sulfolobus islandicus filamentous virus (isolate Iceland/Hveragerdi) (SIFV).